The sequence spans 133 residues: Small ribosomal subunit protein eS17 (133 aa).

It belongs to the eukaryotic ribosomal protein eS17 family.

This Spodoptera frugiperda (Fall armyworm) protein is Small ribosomal subunit protein eS17 (RpS17).